Consider the following 109-residue polypeptide: MSRRPNFGGMGMGNMQGLIKQAKKMQQQMEAEQANLATQEFVGKSADDMVVATFSGDRQLKDLKIDKEAIDPDDPDMLQDLVIDAVNKGIKAVDDATQASMGKYTKGLM.

The protein belongs to the YbaB/EbfC family. Homodimer.

The protein resides in the cytoplasm. It localises to the nucleoid. In terms of biological role, binds to DNA and alters its conformation. May be involved in regulation of gene expression, nucleoid organization and DNA protection. The polypeptide is Nucleoid-associated protein LGAS_0369 (Lactobacillus gasseri (strain ATCC 33323 / DSM 20243 / BCRC 14619 / CIP 102991 / JCM 1131 / KCTC 3163 / NCIMB 11718 / NCTC 13722 / AM63)).